Consider the following 365-residue polypeptide: S-adenosylmethionine decarboxylase proenzyme (365 aa).

Catalysis depends on residues glutamate 31 and glutamate 34. Serine 87 (schiff-base intermediate with substrate; via pyruvic acid) is an active-site residue. Serine 87 is subject to Pyruvic acid (Ser); by autocatalysis. Cysteine 101 (proton donor; for catalytic activity) is an active-site residue. Residues serine 248 and histidine 263 each act as proton acceptor; for processing activity in the active site.

It belongs to the eukaryotic AdoMetDC family. As to quaternary structure, heterotetramer of two alpha and two beta chains. Pyruvate serves as cofactor. Post-translationally, is synthesized initially as an inactive proenzyme. Formation of the active enzyme involves a self-maturation process in which the active site pyruvoyl group is generated from an internal serine residue via an autocatalytic post-translational modification. Two non-identical subunits are generated from the proenzyme in this reaction, and the pyruvate is formed at the N-terminus of the alpha chain, which is derived from the carboxyl end of the proenzyme. The post-translation cleavage follows an unusual pathway, termed non-hydrolytic serinolysis, in which the side chain hydroxyl group of the serine supplies its oxygen atom to form the C-terminus of the beta chain, while the remainder of the serine residue undergoes an oxidative deamination to produce ammonia and the pyruvoyl group blocking the N-terminus of the alpha chain.

The enzyme catalyses S-adenosyl-L-methionine + H(+) = S-adenosyl 3-(methylsulfanyl)propylamine + CO2. Its pathway is amine and polyamine biosynthesis; S-adenosylmethioninamine biosynthesis; S-adenosylmethioninamine from S-adenosyl-L-methionine: step 1/1. The chain is S-adenosylmethionine decarboxylase proenzyme (smd-1) from Onchocerca volvulus.